Reading from the N-terminus, the 435-residue chain is Cytochrome c biogenesis protein Ccs1 (435 aa).

The next 3 membrane-spanning stretches (helical) occupy residues 17–37, 77–97, and 163–183; these read LSLS…GTII, NPCF…CTFS, and IAPI…LISL.

Belongs to the Ccs1/CcsB family. In terms of assembly, may interact with CcsA.

It is found in the plastid. The protein resides in the chloroplast thylakoid membrane. Its function is as follows. Required during biogenesis of c-type cytochromes (cytochrome c6 and cytochrome f) at the step of heme attachment. The polypeptide is Cytochrome c biogenesis protein Ccs1 (Gracilaria tenuistipitata var. liui (Red alga)).